Consider the following 737-residue polypeptide: DNA topoisomerase 4 subunit A (737 aa).

One can recognise a Topo IIA-type catalytic domain in the interval 32-496 (LPDVRDGLKP…SFEEVTLTNQ (465 aa)). Tyrosine 120 (O-(5'-phospho-DNA)-tyrosine intermediate) is an active-site residue.

It belongs to the type II topoisomerase GyrA/ParC subunit family. ParC type 1 subfamily. As to quaternary structure, heterotetramer composed of ParC and ParE.

Its subcellular location is the cell membrane. The enzyme catalyses ATP-dependent breakage, passage and rejoining of double-stranded DNA.. In terms of biological role, topoisomerase IV is essential for chromosome segregation. It relaxes supercoiled DNA. Performs the decatenation events required during the replication of a circular DNA molecule. This chain is DNA topoisomerase 4 subunit A, found in Rickettsia felis (strain ATCC VR-1525 / URRWXCal2) (Rickettsia azadi).